The following is a 192-amino-acid chain: Adenylate kinase (192 aa).

10–18 contacts ATP; it reads GVPGVGGTT.

Belongs to the archaeal adenylate kinase family. As to quaternary structure, monomer.

It is found in the cytoplasm. The enzyme catalyses AMP + ATP = 2 ADP. The chain is Adenylate kinase (adkA) from Methanothermococcus thermolithotrophicus (Methanococcus thermolithotrophicus).